We begin with the raw amino-acid sequence, 217 residues long: Zinc finger CCHC-type and RNA-binding motif-containing protein 1 (217 aa).

Positions 10-88 (STVYVSNLPF…RVIKASIAID (79 aa)) constitute an RRM domain. The CCHC-type zinc finger occupies 105–122 (SKCYECGESGHLSYACPK). Positions 120 to 217 (CPKNMLGERE…YFSDEEELSD (98 aa)) are disordered. Acidic residues predominate over residues 145 to 163 (PEEEIEEVEESEDEGEDPA). Phosphoserine is present on residues Ser-155, Ser-210, and Ser-216.

In terms of assembly, component of the U11/U12 snRNPs that are part of the U12-type spliceosome. Interacts with ZRSR1.

It is found in the nucleus. It localises to the nucleoplasm. The chain is Zinc finger CCHC-type and RNA-binding motif-containing protein 1 (ZCRB1) from Bos taurus (Bovine).